We begin with the raw amino-acid sequence, 489 residues long: UDP-N-acetylmuramate--L-alanine ligase (489 aa).

128-134 (GTHGKTT) lines the ATP pocket.

It belongs to the MurCDEF family.

The protein resides in the cytoplasm. The enzyme catalyses UDP-N-acetyl-alpha-D-muramate + L-alanine + ATP = UDP-N-acetyl-alpha-D-muramoyl-L-alanine + ADP + phosphate + H(+). Its pathway is cell wall biogenesis; peptidoglycan biosynthesis. Cell wall formation. The polypeptide is UDP-N-acetylmuramate--L-alanine ligase (Shewanella sediminis (strain HAW-EB3)).